The following is a 474-amino-acid chain: MAQHDFVPAWLNFSTPQSAKSPTATFEKHGEHLPRGEGRFGVSRRRHNSSDGFFNNGPLRTAGDSWHQPSLFRHDSVDSGVSKGAYAGITGNPSGWHSSSRGHDGMSQRSGGGTGNHRHWNGSFHSRKGCAFQEKPPMEIREEKKEDKVEKLQFEEEDFPSLNPEAGKQHQPCRPIGTPSGVWENPPSAKQPSKMLVIKKVSKEDPAAAFSAAFTSPGSHHANGNKLSSVVPSVYKNLVPKPVPPPSKPNAWKANRMEHKSGSLSSSRESAFTSPISVTKPVVLASGAALSSPKESPSSTTPPIEISSSRLTKLTRRTTDRKSEFLKTLKDDRNGDFSENRDCDKLEDLEDNSTPEPKENGEEGCHQNGLALPVVEEGEVLSHSLEAEHRLLKAMGWQEYPENDENCLPLTEDELKEFHMKTEQLRRNGFGKNGFLQSRSSSLFSPWRSTCKAEFEDSDTETSSSETSDDDAWK.

The tract at residues 17–42 (QSAKSPTATFEKHGEHLPRGEGRFGV) is disordered. A compositionally biased stretch (basic and acidic residues) spans 26–38 (FEKHGEHLPRGEG). 2 positions are modified to phosphoserine: Ser-49 and Ser-76. Residues 91-191 (GNPSGWHSSS…VWENPPSAKQ (101 aa)) are disordered. Over residues 116–128 (NHRHWNGSFHSRK) the composition is skewed to basic residues. Residues 136–154 (PPMEIREEKKEDKVEKLQF) are compositionally biased toward basic and acidic residues. At Ser-202 the chain carries Phosphoserine. The segment at 238 to 371 (LVPKPVPPPS…EEGCHQNGLA (134 aa)) is disordered. Residues 262-277 (GSLSSSRESAFTSPIS) are compositionally biased toward polar residues. The span at 291–312 (SSPKESPSSTTPPIEISSSRLT) shows a compositional bias: low complexity. Ser-292 is modified (phosphoserine). Position 301 is a phosphothreonine (Thr-301). Basic and acidic residues-rich tracts occupy residues 317–346 (RTTD…CDKL) and 356–365 (EPKENGEEGC). A Phosphoserine modification is found at Ser-382. The disordered stretch occupies residues 453–474 (AEFEDSDTETSSSETSDDDAWK).

It belongs to the vasculin family.

It localises to the nucleus. Its function is as follows. Possible transcription factor. This chain is Vasculin-like protein 1 (GPBP1L1), found in Homo sapiens (Human).